The primary structure comprises 492 residues: Aerolysin-4 (492 aa).

Positions 1–23 (MKKLKITGLSLIISGLLMAQAQA) are cleaved as a signal peptide. 2 cysteine pairs are disulfide-bonded: C42–C98 and C182–C187. The segment at 68-84 (WQISGLANGWVIMGPGY) is interaction with host N-linked glycan. Positions 256–288 (YGLSEKVTTKNKFKWPLVGETELSIEIAANQSW) are part of the transmembrane beta-barrel after proteolytic activation of the toxin and insertion into the host membrane. The tract at residues 346-355 (RWGGNAWYTH) is interaction with glycans from host GPI-anchor. The propeptide occupies 446-492 (AAASHSSRARNLSAGQGLRLEIPLDAQELSGLGFNNVSLSVTPAANQ).

Belongs to the aerolysin family. In terms of assembly, homodimer in solution; homoheptamer in the host membrane. After binding to GPI-anchored proteins in target membranes and proteolytic removal of the C-terminal propeptide, the protein assembles into a heptameric pre-pore complex. A further conformation change leads to insertion into the host membrane. In terms of processing, proteolytic cleavage and subsequent release of the propeptide trigger a major conformation change, leading to the formation of a heptameric pre-pore that then inserts into the host membrane.

It is found in the secreted. The protein localises to the host cell membrane. Functionally, secreted, cytolytic toxin that forms pores in host membranes after proteolytic removal of a C-terminal propeptide, leading to destruction of the membrane permeability barrier and cell death. The pores are formed by transmembrane beta-strands and are approximately 3 nm in diameter. The polypeptide is Aerolysin-4 (ahh4) (Aeromonas hydrophila).